The sequence spans 146 residues: Kappa-casein (146 aa).

4 O-linked (GalNAc...) threonine glycosylation sites follow: T97, T107, T112, and T118. Position 121 is a phosphothreonine (T121). A Phosphoserine; alternate modification is found at S125. S125 carries an O-linked (GalNAc...) serine; alternate glycan. T142 carries O-linked (GalNAc...) threonine glycosylation. The residue at position 143 (S143) is a Phosphoserine.

The protein belongs to the kappa-casein family. In terms of tissue distribution, mammary gland specific. Secreted in milk.

The protein localises to the secreted. In terms of biological role, kappa-casein stabilizes micelle formation, preventing casein precipitation in milk. This is Kappa-casein (CSN3) from Panthera uncia (Snow leopard).